A 585-amino-acid polypeptide reads, in one-letter code: Frizzled-5 (585 aa).

Positions 1-26 are cleaved as a signal peptide; the sequence is MARPDPSAPPSLLLLLLAQLVGRAAA. Topologically, residues 27 to 238 are extracellular; the sequence is ASKAPVCQEI…PDERTFATFW (212 aa). Residues 28 to 150 form the FZ domain; sequence SKAPVCQEIT…GDAEVLCMDY (123 aa). Disulfide bonds link Cys-33/Cys-94, Cys-41/Cys-87, Cys-78/Cys-116, Cys-105/Cys-147, and Cys-109/Cys-133. N-linked (GlcNAc...) asparagine glycosylation is present at Asn-47. Residue Asn-151 is glycosylated (N-linked (GlcNAc...) asparagine). A disordered region spans residues 156-182; it reads TTASPKSFPAKPTLPGPPGAPSSGGEC. Residues 239–259 form a helical membrane-spanning segment; that stretch reads IGLWSVLCFISTSTTVATFLI. The Cytoplasmic segment spans residues 260–270; that stretch reads DMERFRYPERP. The chain crosses the membrane as a helical span at residues 271-291; the sequence is IIFLSACYLCVSLGFLVRLVV. The Extracellular portion of the chain corresponds to 292–315; it reads GHASVACSREHSHIHYETTGPALC. A helical transmembrane segment spans residues 316 to 336; that stretch reads TVVFLLVYFFGMASSIWWVIL. At 337–358 the chain is on the cytoplasmic side; that stretch reads SLTWFLAAGMKWGNEAIAGYAQ. Residues 359–379 traverse the membrane as a helical segment; sequence YFHLAAWLIPSVKSITALALS. Residues 380–402 are Extracellular-facing; it reads SVDGDPVAGICYVGNQNLNSLRG. The helical transmembrane segment at 403–423 threads the bilayer; it reads FVLGPLVLYLLVGTLFLLAGF. At 424-449 the chain is on the cytoplasmic side; it reads VSLFRIRSVIKQGGTKTDKLEKLMIR. A helical transmembrane segment spans residues 450-470; sequence IGIFTLLYTVPASIVVACYLY. At 471-500 the chain is on the extracellular side; the sequence is EQHYRESWEAALTCACPGPDAGQPRAKPEY. The helical transmembrane segment at 501–521 threads the bilayer; sequence WVLMLKYFMCLVVGITSGVWI. The Cytoplasmic segment spans residues 522 to 585; sequence WSGKTLESWR…YHKQVSLSHV (64 aa). Positions 582 to 584 match the PDZ-binding motif; the sequence is LSH.

It belongs to the G-protein coupled receptor Fz/Smo family. Binding of unsaturated fatty acid molecules (via FZ domain) promotes homodimerization (via FZ domain). Interacts with WNT2B. Interacts with WNT7A. Interacts with GOPC. Post-translationally, ubiquitinated by RNF43 and ZNRF3, leading to its degradation by the proteasome. Detected in hippocampus (at protein level). Expressed in eye, kidney, lung, chondrocytes, epithelial cells of the small intestine and gobelet cells of the colon.

Its subcellular location is the cell membrane. The protein localises to the golgi apparatus membrane. It localises to the synapse. It is found in the perikaryon. The protein resides in the cell projection. Its subcellular location is the dendrite. The protein localises to the axon. Receptor for Wnt proteins. Functions in the canonical Wnt/beta-catenin signaling pathway. In vitro activates WNT2, WNT10B, WNT5A, but not WNT2B or WNT4 signaling. In neurons, activation by WNT7A promotes formation of synapses. May be involved in transduction and intercellular transmission of polarity information during tissue morphogenesis and/or in differentiated tissues. Plays a role in yolk sac angiogenesis and in placental vascularization. Plays a role in ocular development. The protein is Frizzled-5 (Fzd5) of Mus musculus (Mouse).